A 120-amino-acid chain; its full sequence is Spermidine export protein MdtJ (120 aa).

The next 4 helical transmembrane spans lie at 1 to 21 (MFYWILLALAIVAEITGTLSM), 31 to 51 (AGYILMLVMITLSYIFLSFAV), 54 to 74 (IALGVAYALWEGIGILFITVF), and 81 to 101 (EVLSTMKIVGLLTLIVGIVLI).

The protein belongs to the drug/metabolite transporter (DMT) superfamily. Small multidrug resistance (SMR) (TC 2.A.7.1) family. MdtJ subfamily. In terms of assembly, forms a complex with MdtI.

It is found in the cell inner membrane. Functionally, catalyzes the excretion of spermidine. In Salmonella arizonae (strain ATCC BAA-731 / CDC346-86 / RSK2980), this protein is Spermidine export protein MdtJ.